Here is a 919-residue protein sequence, read N- to C-terminus: Isoleucine--tRNA ligase (919 aa).

The 'HIGH' region signature appears at 59–69; it reads PYANGHLHIGH. Glutamate 570 contacts L-isoleucyl-5'-AMP. The 'KMSKS' region motif lies at 611 to 615; the sequence is KMSKS. Lysine 614 contributes to the ATP binding site. 4 residues coordinate Zn(2+): cysteine 893, cysteine 896, cysteine 908, and cysteine 911.

The protein belongs to the class-I aminoacyl-tRNA synthetase family. IleS type 1 subfamily. Monomer. The cofactor is Zn(2+).

The protein resides in the cytoplasm. It catalyses the reaction tRNA(Ile) + L-isoleucine + ATP = L-isoleucyl-tRNA(Ile) + AMP + diphosphate. Functionally, catalyzes the attachment of isoleucine to tRNA(Ile). As IleRS can inadvertently accommodate and process structurally similar amino acids such as valine, to avoid such errors it has two additional distinct tRNA(Ile)-dependent editing activities. One activity is designated as 'pretransfer' editing and involves the hydrolysis of activated Val-AMP. The other activity is designated 'posttransfer' editing and involves deacylation of mischarged Val-tRNA(Ile). This chain is Isoleucine--tRNA ligase, found in Campylobacter curvus (strain 525.92).